A 338-amino-acid polypeptide reads, in one-letter code: Increasing suppression factor 1 (338 aa).

Low complexity predominate over residues 50 to 70; that stretch reads ENSSKSNNSHHSSSTNAGNTS. The interval 50–72 is disordered; sequence ENSSKSNNSHHSSSTNAGNTSRH. At Ser-119 the chain carries Phosphoserine. The segment covering 267-306 has biased composition (low complexity); it reads SLLSNGSSSSPLQTRNNSYSNSLVKSPSNSSLNTSVASSN. The segment at 267-322 is disordered; it reads SLLSNGSSSSPLQTRNNSYSNSLVKSPSNSSLNTSVASSNEESSPHTSNCLEERNP. Polar residues predominate over residues 307–316; the sequence is EESSPHTSNC.

Belongs to the ISF1/MBR1 family.

In terms of biological role, could influence the NAM7/UPF1 function, possibly at the level of mRNA turnover. Participates in mitochondrial biogenesis. This chain is Increasing suppression factor 1 (ISF1), found in Saccharomyces cerevisiae (strain JAY291) (Baker's yeast).